The chain runs to 201 residues: Holliday junction branch migration complex subunit RuvA (201 aa).

Positions 1 to 64 (MIGRLHGKII…EDAHLLFGFA (64 aa)) are domain I. The segment at 65 to 143 (QKQDRTLFRE…GVAQSDFFEE (79 aa)) is domain II. Residues 144-154 (HSVETIVATHS) form a flexible linker region. Residues 154–201 (SHDPADEARDALVALGYKLADAEKMIKKVNKAGATSEQLIREALKASL) form a domain III region.

The protein belongs to the RuvA family. Homotetramer. Forms an RuvA(8)-RuvB(12)-Holliday junction (HJ) complex. HJ DNA is sandwiched between 2 RuvA tetramers; dsDNA enters through RuvA and exits via RuvB. An RuvB hexamer assembles on each DNA strand where it exits the tetramer. Each RuvB hexamer is contacted by two RuvA subunits (via domain III) on 2 adjacent RuvB subunits; this complex drives branch migration. In the full resolvosome a probable DNA-RuvA(4)-RuvB(12)-RuvC(2) complex forms which resolves the HJ.

The protein localises to the cytoplasm. The RuvA-RuvB-RuvC complex processes Holliday junction (HJ) DNA during genetic recombination and DNA repair, while the RuvA-RuvB complex plays an important role in the rescue of blocked DNA replication forks via replication fork reversal (RFR). RuvA specifically binds to HJ cruciform DNA, conferring on it an open structure. The RuvB hexamer acts as an ATP-dependent pump, pulling dsDNA into and through the RuvAB complex. HJ branch migration allows RuvC to scan DNA until it finds its consensus sequence, where it cleaves and resolves the cruciform DNA. In Actinobacillus pleuropneumoniae serotype 7 (strain AP76), this protein is Holliday junction branch migration complex subunit RuvA.